Consider the following 116-residue polypeptide: UPF0134 protein MPN_038 (116 aa).

This sequence belongs to the UPF0134 family.

The protein is UPF0134 protein MPN_038 of Mycoplasma pneumoniae (strain ATCC 29342 / M129 / Subtype 1) (Mycoplasmoides pneumoniae).